The chain runs to 135 residues: Type 3 secretion system stator protein (135 aa).

Belongs to the SctL stator family. In terms of assembly, the core secretion machinery of the T3SS is composed of approximately 20 different proteins, including cytoplasmic components, a base, an export apparatus and a needle. This subunit is part of the cytosolic complex.

Its subcellular location is the cytoplasm. Functionally, component of the type III secretion system (T3SS), also called injectisome, which is used to inject bacterial effector proteins into eukaryotic host cells. Acts as a regulator of the HrcN/SctN ATPase activity. This Rhizobium fredii (Sinorhizobium fredii) protein is Type 3 secretion system stator protein.